We begin with the raw amino-acid sequence, 403 residues long: uncharacterized protein (403 aa).

2 consecutive transmembrane segments (helical) span residues 29–49 and 55–75; these read FVIFSVLFSLIIGFIASCGFL and AFIASGLCFALLVSVVSFFGC.

Belongs to the chlamydial CPn_0129/CT_036/TC_0306 family.

It localises to the cell membrane. This is an uncharacterized protein from Chlamydia trachomatis serovar D (strain ATCC VR-885 / DSM 19411 / UW-3/Cx).